A 335-amino-acid chain; its full sequence is MNKINAAITAVGAYLPEDVITNDDLEKMVDTNDEWIMTRVGIKERRILRDKNKGASYLAIRAAQDLFERHGIDPKSIDGLILATNSSDYHFPSTASIVAHEIGCGDIFSFDMQAACPTFIYALEVGANFIRSGRYSKILVIATEKMTAFTDYTDRATCPLFGDGAGCVLLEATEEEVGVMDAVLHSNGIGKDHLIMKAGGSACPATHETVDNRWHYVYQEGQVVFKHAVVDMCNSCVEIMERNNLSHDDITWVVPHQANLRIIDAVARRMGVPYEKVMVNIERYGNTSSATIPICLWEWEHKLKKGDVLVMTSFGAGFTWGAVYVKWAYDGSTVR.

Active-site residues include Cys116 and His256. The ACP-binding stretch occupies residues 257 to 261 (QANLR). The active site involves Asn286.

It belongs to the thiolase-like superfamily. FabH family. As to quaternary structure, homodimer.

Its subcellular location is the cytoplasm. It catalyses the reaction malonyl-[ACP] + acetyl-CoA + H(+) = 3-oxobutanoyl-[ACP] + CO2 + CoA. Its pathway is lipid metabolism; fatty acid biosynthesis. Its function is as follows. Catalyzes the condensation reaction of fatty acid synthesis by the addition to an acyl acceptor of two carbons from malonyl-ACP. Catalyzes the first condensation reaction which initiates fatty acid synthesis and may therefore play a role in governing the total rate of fatty acid production. Possesses both acetoacetyl-ACP synthase and acetyl transacylase activities. Its substrate specificity determines the biosynthesis of branched-chain and/or straight-chain of fatty acids. In Porphyromonas gingivalis (strain ATCC BAA-308 / W83), this protein is Beta-ketoacyl-[acyl-carrier-protein] synthase III.